Reading from the N-terminus, the 419-residue chain is L-rhamnose isomerase (419 aa).

3 residues coordinate Mn(2+): histidine 262, aspartate 294, and aspartate 296.

The protein belongs to the rhamnose isomerase family. As to quaternary structure, homotetramer. Requires Mn(2+) as cofactor.

Its subcellular location is the cytoplasm. It carries out the reaction L-rhamnopyranose = L-rhamnulose. Its pathway is carbohydrate degradation; L-rhamnose degradation; glycerone phosphate from L-rhamnose: step 1/3. Catalyzes the interconversion of L-rhamnose and L-rhamnulose. The polypeptide is L-rhamnose isomerase (Klebsiella pneumoniae (strain 342)).